The following is a 227-amino-acid chain: Cytochrome c oxidase subunit 2 (227 aa).

Over 1–14 the chain is Mitochondrial intermembrane; that stretch reads MAYPFQLGLQDATS. Residues 15–45 form a helical membrane-spanning segment; that stretch reads PIMEELTNFHDHTLMIVFLISTLVLYIISLM. The Mitochondrial matrix portion of the chain corresponds to 46-59; the sequence is LTTKLTHTSTMDAQ. The chain crosses the membrane as a helical span at residues 60 to 87; sequence EVETIWTILPAVILILIALPSLRILYMM. Residues 88–227 lie on the Mitochondrial intermembrane side of the membrane; sequence DEINNPVLTV…YFENWSASMI (140 aa). Residues His161, Cys196, Glu198, Cys200, His204, and Met207 each coordinate Cu cation. Position 198 (Glu198) interacts with Mg(2+). Tyr218 carries the post-translational modification Phosphotyrosine.

This sequence belongs to the cytochrome c oxidase subunit 2 family. In terms of assembly, component of the cytochrome c oxidase (complex IV, CIV), a multisubunit enzyme composed of 14 subunits. The complex is composed of a catalytic core of 3 subunits MT-CO1, MT-CO2 and MT-CO3, encoded in the mitochondrial DNA, and 11 supernumerary subunits COX4I, COX5A, COX5B, COX6A, COX6B, COX6C, COX7A, COX7B, COX7C, COX8 and NDUFA4, which are encoded in the nuclear genome. The complex exists as a monomer or a dimer and forms supercomplexes (SCs) in the inner mitochondrial membrane with NADH-ubiquinone oxidoreductase (complex I, CI) and ubiquinol-cytochrome c oxidoreductase (cytochrome b-c1 complex, complex III, CIII), resulting in different assemblies (supercomplex SCI(1)III(2)IV(1) and megacomplex MCI(2)III(2)IV(2)). Found in a complex with TMEM177, COA6, COX18, COX20, SCO1 and SCO2. Interacts with TMEM177 in a COX20-dependent manner. Interacts with COX20. Interacts with COX16. It depends on Cu cation as a cofactor.

Its subcellular location is the mitochondrion inner membrane. It catalyses the reaction 4 Fe(II)-[cytochrome c] + O2 + 8 H(+)(in) = 4 Fe(III)-[cytochrome c] + 2 H2O + 4 H(+)(out). Its function is as follows. Component of the cytochrome c oxidase, the last enzyme in the mitochondrial electron transport chain which drives oxidative phosphorylation. The respiratory chain contains 3 multisubunit complexes succinate dehydrogenase (complex II, CII), ubiquinol-cytochrome c oxidoreductase (cytochrome b-c1 complex, complex III, CIII) and cytochrome c oxidase (complex IV, CIV), that cooperate to transfer electrons derived from NADH and succinate to molecular oxygen, creating an electrochemical gradient over the inner membrane that drives transmembrane transport and the ATP synthase. Cytochrome c oxidase is the component of the respiratory chain that catalyzes the reduction of oxygen to water. Electrons originating from reduced cytochrome c in the intermembrane space (IMS) are transferred via the dinuclear copper A center (CU(A)) of subunit 2 and heme A of subunit 1 to the active site in subunit 1, a binuclear center (BNC) formed by heme A3 and copper B (CU(B)). The BNC reduces molecular oxygen to 2 water molecules using 4 electrons from cytochrome c in the IMS and 4 protons from the mitochondrial matrix. In Leopoldamys sabanus (Long-tailed giant rat), this protein is Cytochrome c oxidase subunit 2 (MT-CO2).